Here is a 323-residue protein sequence, read N- to C-terminus: Breast cancer metastasis-suppressor 1-like protein (323 aa).

A compositionally biased stretch (basic and acidic residues) spans 1–15 (MPVHSREKKENNHDE). A disordered region spans residues 1-56 (MPVHSREKKENNHDEMEVDYGENEGSTSEEEETESSSVSEEGDSSEMDDEDCERRR). The span at 16-51 (MEVDYGENEGSTSEEEETESSSVSEEGDSSEMDDED) shows a compositional bias: acidic residues. 2 coiled-coil regions span residues 50–82 (EDCERRRMECLDEMSNLEKQFTDLKDQLYKERL) and 147–178 (EKLLLYDTVQSELEEKIRRLEEDRHSIDITSE).

Belongs to the BRMS1 family.

The protein localises to the nucleus. Involved in the histone deacetylase (HDAC1)-dependent transcriptional repression activity. This Gallus gallus (Chicken) protein is Breast cancer metastasis-suppressor 1-like protein (BRMS1L).